The sequence spans 429 residues: Glucose-6-phosphate exchanger SLC37A4 (429 aa).

10 consecutive transmembrane segments (helical) span residues 84-104 (LLLV…PVFA), 105-125 (ALWF…GKVL), 139-159 (AILS…ATIL), 167-187 (STLA…LLLI), 219-239 (ELLL…VFGV), 260-280 (LVGS…SIAA), 302-322 (GLLL…RVTV), 329-349 (LWIL…IALF), 368-388 (IVGL…STIA), and 394-414 (STAF…FFLL).

It belongs to the major facilitator superfamily. Organophosphate:Pi antiporter (OPA) (TC 2.A.1.4) family. Mostly expressed in liver and kidney.

The protein resides in the endoplasmic reticulum membrane. It catalyses the reaction D-glucose 6-phosphate(in) + phosphate(out) = D-glucose 6-phosphate(out) + phosphate(in). Inhibited by vanadate and chlorogenic acid. Its function is as follows. Inorganic phosphate and glucose-6-phosphate antiporter of the endoplasmic reticulum. Transports cytoplasmic glucose-6-phosphate into the lumen of the endoplasmic reticulum and translocates inorganic phosphate into the opposite direction. Forms with glucose-6-phosphatase the complex responsible for glucose production through glycogenolysis and gluconeogenesis. Hence, it plays a central role in homeostatic regulation of blood glucose levels. This chain is Glucose-6-phosphate exchanger SLC37A4, found in Homo sapiens (Human).